Consider the following 796-residue polypeptide: Kinesin-like protein KIF3C (796 aa).

The region spanning 10–367 (ALKVVARCRP…LRFANRAKNI (358 aa)) is the Kinesin motor domain. Residue 97-104 (GQTGTGKT) coordinates ATP. Disordered stretches follow at residues 251–292 (ERQN…PKEA), 397–421 (EKKG…SAPA), and 754–796 (PSTS…VDHD). Over residues 270–284 (AGGGGGGGGTSGSGS) the composition is skewed to gly residues. Positions 378-632 (KDTLLREFQE…NEQTRELKLK (255 aa)) form a coiled coil. Residues 401 to 416 (MLGKRPRRKSSRRKKA) are compositionally biased toward basic residues. Residues 633–793 (YLIIENFIPP…SAPLHPATVV (161 aa)) are globular.

It belongs to the TRAFAC class myosin-kinesin ATPase superfamily. Kinesin family. Kinesin II subfamily. Heterodimer of KIF3A and KIF3C.

Its subcellular location is the cytoplasm. It localises to the cytoskeleton. Functionally, microtubule-based anterograde translocator for membranous organelles. The chain is Kinesin-like protein KIF3C (Kif3c) from Rattus norvegicus (Rat).